The primary structure comprises 64 residues: Large ribosomal subunit protein bL32 (64 aa).

It belongs to the bacterial ribosomal protein bL32 family.

The polypeptide is Large ribosomal subunit protein bL32 (Flavobacterium psychrophilum (strain ATCC 49511 / DSM 21280 / CIP 103535 / JIP02/86)).